The chain runs to 274 residues: Large ribosomal subunit protein uL2 (274 aa).

2 disordered regions span residues 28 to 54 (KPFAPLLEKNSKTGGRNNNGRITTRHI) and 221 to 274 (RGTA…RSKK). Polar residues predominate over residues 39 to 49 (KTGGRNNNGRI).

This sequence belongs to the universal ribosomal protein uL2 family. Part of the 50S ribosomal subunit. Forms a bridge to the 30S subunit in the 70S ribosome.

Its function is as follows. One of the primary rRNA binding proteins. Required for association of the 30S and 50S subunits to form the 70S ribosome, for tRNA binding and peptide bond formation. It has been suggested to have peptidyltransferase activity; this is somewhat controversial. Makes several contacts with the 16S rRNA in the 70S ribosome. This is Large ribosomal subunit protein uL2 from Edwardsiella ictaluri (strain 93-146).